The sequence spans 143 residues: Peptide methionine sulfoxide reductase MsrB (143 aa).

The MsrB domain occupies 16-139; that stretch reads DAELRRRLTP…NSAALNFESR (124 aa). Zn(2+) contacts are provided by cysteine 55, cysteine 58, cysteine 104, and cysteine 107. Cysteine 128 (nucleophile) is an active-site residue.

It belongs to the MsrB Met sulfoxide reductase family. Zn(2+) serves as cofactor.

It carries out the reaction L-methionyl-[protein] + [thioredoxin]-disulfide + H2O = L-methionyl-(R)-S-oxide-[protein] + [thioredoxin]-dithiol. The protein is Peptide methionine sulfoxide reductase MsrB of Burkholderia multivorans (strain ATCC 17616 / 249).